The following is a 512-amino-acid chain: Glycerol-3-phosphate dehydrogenase (512 aa).

Residue 16-44 participates in FAD binding; the sequence is DVAVVGGGINGVGIAADAAGRGLSVFLCE.

Belongs to the FAD-dependent glycerol-3-phosphate dehydrogenase family. FAD is required as a cofactor.

It is found in the cytoplasm. It carries out the reaction a quinone + sn-glycerol 3-phosphate = dihydroxyacetone phosphate + a quinol. This chain is Glycerol-3-phosphate dehydrogenase (glpD), found in Pseudomonas aeruginosa (strain ATCC 15692 / DSM 22644 / CIP 104116 / JCM 14847 / LMG 12228 / 1C / PRS 101 / PAO1).